The sequence spans 290 residues: 4-hydroxy-tetrahydrodipicolinate synthase (290 aa).

A pyruvate-binding site is contributed by T44. The active-site Proton donor/acceptor is Y132. K160 acts as the Schiff-base intermediate with substrate in catalysis. A pyruvate-binding site is contributed by I202.

It belongs to the DapA family. Homotetramer; dimer of dimers.

The protein resides in the cytoplasm. The catalysed reaction is L-aspartate 4-semialdehyde + pyruvate = (2S,4S)-4-hydroxy-2,3,4,5-tetrahydrodipicolinate + H2O + H(+). It participates in amino-acid biosynthesis; L-lysine biosynthesis via DAP pathway; (S)-tetrahydrodipicolinate from L-aspartate: step 3/4. Functionally, catalyzes the condensation of (S)-aspartate-beta-semialdehyde [(S)-ASA] and pyruvate to 4-hydroxy-tetrahydrodipicolinate (HTPA). The protein is 4-hydroxy-tetrahydrodipicolinate synthase of Ruegeria pomeroyi (strain ATCC 700808 / DSM 15171 / DSS-3) (Silicibacter pomeroyi).